The sequence spans 145 residues: ATP synthase epsilon chain (145 aa).

Belongs to the ATPase epsilon chain family. As to quaternary structure, F-type ATPases have 2 components, CF(1) - the catalytic core - and CF(0) - the membrane proton channel. CF(1) has five subunits: alpha(3), beta(3), gamma(1), delta(1), epsilon(1). CF(0) has three main subunits: a, b and c.

The protein localises to the cell inner membrane. Its function is as follows. Produces ATP from ADP in the presence of a proton gradient across the membrane. The protein is ATP synthase epsilon chain of Francisella tularensis subsp. tularensis (strain FSC 198).